Here is a 646-residue protein sequence, read N- to C-terminus: Cell surface glycoprotein MUC18 (646 aa).

An N-terminal signal peptide occupies residues 1–23 (MGLPRLVCAFLLAACCCCPRVAG). Ig-like V-type domains lie at 24–129 (VPGE…YRIQ) and 139–242 (PNIQ…REVT). Residues 24–559 (VPGEAEQPAP…RKLPEPESRG (536 aa)) lie on the Extracellular side of the membrane. 4 disulfide bridges follow: C48–C116, C161–C223, C272–C320, and C365–C407. N-linked (GlcNAc...) asparagine glycosylation occurs at N56. Ig-like C2-type domains are found at residues 244-330 (PVFY…TMIS), 335-424 (PQEL…QLVN), and 430-510 (PPWM…KNTS). The segment at 278 to 299 (PPPHFSISKQNPSTREAEEETT) is disordered. N-linked (GlcNAc...) asparagine glycans are attached at residues N418, N449, N467, N508, N518, N527, and N544. A disulfide bridge connects residues C452 and C499. Residues 525–554 (DSNTTTGLSTSTASPHTRANSTSTERKLPE) are disordered. Over residues 533 to 547 (STSTASPHTRANSTS) the composition is skewed to polar residues. The helical transmembrane segment at 560–583 (VVIVAVIVCILVLAVLGAVLYFLY) threads the bilayer. Residues 584–646 (KKGKLPCRRS…QGEKYIDLRH (63 aa)) lie on the Cytoplasmic side of the membrane. 3 positions are modified to phosphoserine: S606, S614, and S628. Residues 620–646 (EMGLLQGSSGDKRAPGDQGEKYIDLRH) form a disordered region. The span at 629-646 (GDKRAPGDQGEKYIDLRH) shows a compositional bias: basic and acidic residues.

As to expression, detected in endothelial cells in vascular tissue throughout the body. May appear at the surface of neural crest cells during their embryonic migration. Appears to be limited to vascular smooth muscle in normal adult tissues. Associated with tumor progression and the development of metastasis in human malignant melanoma. Expressed most strongly on metastatic lesions and advanced primary tumors and is only rarely detected in benign melanocytic nevi and thin primary melanomas with a low probability of metastasis.

It is found in the membrane. Its function is as follows. Plays a role in cell adhesion, and in cohesion of the endothelial monolayer at intercellular junctions in vascular tissue. Its expression may allow melanoma cells to interact with cellular elements of the vascular system, thereby enhancing hematogeneous tumor spread. Could be an adhesion molecule active in neural crest cells during embryonic development. Acts as a surface receptor that triggers tyrosine phosphorylation of FYN and PTK2/FAK1, and a transient increase in the intracellular calcium concentration. The sequence is that of Cell surface glycoprotein MUC18 (MCAM) from Homo sapiens (Human).